The following is a 356-amino-acid chain: Nicotinate-nucleotide--dimethylbenzimidazole phosphoribosyltransferase (356 aa).

The active-site Proton acceptor is the glutamate 317.

This sequence belongs to the CobT family. As to quaternary structure, homodimer.

It carries out the reaction 5,6-dimethylbenzimidazole + nicotinate beta-D-ribonucleotide = alpha-ribazole 5'-phosphate + nicotinate + H(+). The protein operates within nucleoside biosynthesis; alpha-ribazole biosynthesis; alpha-ribazole from 5,6-dimethylbenzimidazole: step 1/2. Its function is as follows. Catalyzes the synthesis of alpha-ribazole-5'-phosphate from nicotinate mononucleotide (NAMN) and 5,6-dimethylbenzimidazole (DMB). The protein is Nicotinate-nucleotide--dimethylbenzimidazole phosphoribosyltransferase of Salmonella paratyphi A (strain ATCC 9150 / SARB42).